The sequence spans 225 residues: Small ribosomal subunit protein uS3 (225 aa).

The KH type-2 domain maps to 38 to 106; that stretch reads IRKFVQNRFN…PVNLNIIEVK (69 aa).

This sequence belongs to the universal ribosomal protein uS3 family. As to quaternary structure, part of the 30S ribosomal subunit. Forms a tight complex with proteins S10 and S14.

In terms of biological role, binds the lower part of the 30S subunit head. Binds mRNA in the 70S ribosome, positioning it for translation. The chain is Small ribosomal subunit protein uS3 from Leptospira interrogans serogroup Icterohaemorrhagiae serovar copenhageni (strain Fiocruz L1-130).